Consider the following 471-residue polypeptide: ATP synthase subunit beta (471 aa).

Residue Gly-153–Thr-160 participates in ATP binding.

This sequence belongs to the ATPase alpha/beta chains family. F-type ATPases have 2 components, CF(1) - the catalytic core - and CF(0) - the membrane proton channel. CF(1) has five subunits: alpha(3), beta(3), gamma(1), delta(1), epsilon(1). CF(0) has four main subunits: a(1), b(1), b'(1) and c(9-12).

The protein localises to the cell membrane. It carries out the reaction ATP + H2O + 4 H(+)(in) = ADP + phosphate + 5 H(+)(out). Its function is as follows. Produces ATP from ADP in the presence of a proton gradient across the membrane. The catalytic sites are hosted primarily by the beta subunits. The sequence is that of ATP synthase subunit beta from Chloroflexus aggregans (strain MD-66 / DSM 9485).